Reading from the N-terminus, the 363-residue chain is Dihydroorotate dehydrogenase (quinone) (363 aa).

FMN contacts are provided by residues 62-66 (AGYDK) and Thr86. Lys66 contributes to the substrate binding site. 111–115 (NRLGF) is a substrate binding site. FMN is bound by residues Asn139 and Asn170. Substrate is bound at residue Asn170. The active-site Nucleophile is the Ser173. Asn175 lines the substrate pocket. The FMN site is built by Lys215 and Ser243. Position 244–245 (244–245 (NT)) interacts with substrate. FMN-binding positions include Gly266, Gly295, and 316-317 (YS).

This sequence belongs to the dihydroorotate dehydrogenase family. Type 2 subfamily. As to quaternary structure, monomer. The cofactor is FMN.

The protein localises to the cell membrane. The catalysed reaction is (S)-dihydroorotate + a quinone = orotate + a quinol. Its pathway is pyrimidine metabolism; UMP biosynthesis via de novo pathway; orotate from (S)-dihydroorotate (quinone route): step 1/1. Catalyzes the conversion of dihydroorotate to orotate with quinone as electron acceptor. The chain is Dihydroorotate dehydrogenase (quinone) from Agrobacterium fabrum (strain C58 / ATCC 33970) (Agrobacterium tumefaciens (strain C58)).